The chain runs to 469 residues: Interstitial collagenase (469 aa).

A signal peptide spans 1–19; it reads MFSLLLLLLLLCNTGSHGF. Positions 20–99 are cleaved as a propeptide — activation peptide; that stretch reads PAATSETQEQ…PRCGVPDVAE (80 aa). Ser-57 carries the phosphoserine modification. The short motif at 90-97 is the Cysteine switch element; the sequence is PRCGVPDV. A Zn(2+)-binding site is contributed by Cys-92. Asn-120 carries an N-linked (GlcNAc...) asparagine glycan. Residues Asp-124 and Asp-158 each contribute to the Ca(2+) site. Residues His-168 and Asp-170 each coordinate Zn(2+). Ca(2+)-binding residues include Asp-175, Gly-176, Gly-178, and Asn-180. Residue His-183 participates in Zn(2+) binding. Ca(2+) is bound by residues Gly-190, Gly-192, and Asp-194. Zn(2+) is bound at residue His-196. The Ca(2+) site is built by Asp-198, Glu-199, and Glu-201. Residue His-218 participates in Zn(2+) binding. Glu-219 is an active-site residue. Residues His-222 and His-228 each coordinate Zn(2+). Thr-274 carries the post-translational modification Phosphothreonine. Hemopexin repeat units follow at residues 275 to 324, 325 to 371, 374 to 422, and 423 to 466; these read PQVC…WPQV, PNGL…FGFP, VKNI…FPGI, and GNKV…WFNC. Residues Cys-278 and Cys-466 are joined by a disulfide bond. Residues Asp-285 and Gln-329 each contribute to the Ca(2+) site. Tyr-360 bears the Phosphotyrosine; by PKDCC mark. Ca(2+) contacts are provided by Asp-378 and Asp-427.

It belongs to the peptidase M10A family. Ca(2+) is required as a cofactor. The cofactor is Zn(2+). Post-translationally, undergoes autolytic cleavage to produce a N-terminal fragment having reduced collagenolytic activity. In terms of processing, tyrosine phosphorylated in platelets by PKDCC/VLK.

It localises to the secreted. The protein resides in the extracellular space. It is found in the extracellular matrix. It catalyses the reaction Cleavage of the triple helix of collagen at about three-quarters of the length of the molecule from the N-terminus, at 775-Gly-|-Ile-776 in the alpha1(I) chain. Cleaves synthetic substrates and alpha-macroglobulins at bonds where P1' is a hydrophobic residue.. Its activity is regulated as follows. Can be activated without removal of the activation peptide. In terms of biological role, cleaves collagens of types I, II, and III at one site in the helical domain. Also cleaves collagens of types VII and X. The protein is Interstitial collagenase (MMP1) of Sus scrofa (Pig).